Reading from the N-terminus, the 30-residue chain is uncharacterized protein (30 aa).

This is an uncharacterized protein from Treponema pallidum (strain Nichols).